The chain runs to 115 residues: UPF0102 protein Kole_1919 (115 aa).

This sequence belongs to the UPF0102 family.

This Kosmotoga olearia (strain ATCC BAA-1733 / DSM 21960 / TBF 19.5.1) protein is UPF0102 protein Kole_1919.